Here is a 404-residue protein sequence, read N- to C-terminus: Sorting nexin-5 (404 aa).

Residue A2 is modified to N-acetylalanine. The 148-residue stretch at 25–172 folds into the PX domain; the sequence is LNVDPSLQID…HVFLEYDQDL (148 aa). A 1,2-diacyl-sn-glycero-3-phospho-(1D-myo-inositol-4,5-bisphosphate) is bound by residues 40–46, 99–105, and 113–116; these read SERDKVK, FDGPREK, and EGSM. The tract at residues 169 to 261 is interaction with DOCK1; sequence DQDLSVRRKN…HSLALEEPTV (93 aa). The tract at residues 183–200 is membrane-binding amphipathic helix; it reads FGGFFKSVVKSADEVLFS. S193 carries the phosphoserine modification. Residues 202–404 form the BAR domain; that stretch reads VKEVDDFFEQ…QSCIDLFKNN (203 aa). K275 is subject to N6-acetyllysine.

This sequence belongs to the sorting nexin family. Forms heterodimers with BAR domain-containing sorting nexins SNX1 and SNX2; does not homodimerize. The heterodimers are proposed to self-assemble into helical arrays on the membrane to stabilize and expand local membrane curvature underlying endosomal tubule formation. Thought to be a component of the originally described retromer complex (also called SNX-BAR retromer) which is a pentamer containing the heterotrimeric retromer cargo-selective complex (CSC), also described as vacuolar protein sorting subcomplex (VPS), and a heterodimeric membrane-deforming subcomplex formed between SNX1 or SNX2 and SNX5 or SNX6 (also called SNX-BAR subcomplex); the respective CSC and SNX-BAR subcomplexes associate with low affinity. Interacts with SNX1, SNX2, VPS26A, VPS29, VPS35, DCTN1, DOCK1, MIB1, PIP5K1C. Interacts with HGS; increased by PIP5K1C kinase activity and by PtdIns(3P) and/or PtdIns(3,4)P2. In terms of tissue distribution, detected in macrophages (at protein level).

It is found in the endosome. The protein localises to the early endosome. Its subcellular location is the early endosome membrane. It localises to the cell membrane. The protein resides in the cytoplasmic vesicle membrane. It is found in the cytoplasm. The protein localises to the cell projection. Its subcellular location is the phagocytic cup. It localises to the ruffle. Functionally, involved in several stages of intracellular trafficking. Interacts with membranes containing phosphatidylinositol lipids. Acts in part as component of the retromer membrane-deforming SNX-BAR subcomplex. The SNX-BAR retromer mediates retrograde transport of cargo proteins from endosomes to the trans-Golgi network (TGN) and is involved in endosome-to-plasma membrane transport for cargo protein recycling. The SNX-BAR subcomplex functions to deform the donor membrane into a tubular profile called endosome-to-TGN transport carrier (ETC). Does not have in vitro vesicle-to-membrane remodeling activity. Involved in retrograde transport of lysosomal enzyme receptor IGF2R. May function as link between endosomal transport vesicles and dynactin. Plays a role in the internalization of EGFR after EGF stimulation. Involved in EGFR endosomal sorting and degradation; the function involves PIP5K1C and is retromer-independent. Together with PIP5K1C facilitates HGS interaction with ubiquitinated EGFR, which initiates EGFR sorting to intraluminal vesicles (ILVs) of the multivesicular body for subsequent lysosomal degradation. Involved in E-cadherin sorting and degradation; inhibits PIP5K1C-mediated E-cadherin degradation. Plays a role in macropinocytosis. This Mus musculus (Mouse) protein is Sorting nexin-5 (Snx5).